The primary structure comprises 160 residues: Transcription elongation factor GreA (160 aa).

Positions 49–73 (HAAKEEQSHNEGRIADLEDKLARAD) form a coiled coil.

The protein belongs to the GreA/GreB family.

Its function is as follows. Necessary for efficient RNA polymerase transcription elongation past template-encoded arresting sites. The arresting sites in DNA have the property of trapping a certain fraction of elongating RNA polymerases that pass through, resulting in locked ternary complexes. Cleavage of the nascent transcript by cleavage factors such as GreA or GreB allows the resumption of elongation from the new 3'terminus. GreA releases sequences of 2 to 3 nucleotides. This Rhodopseudomonas palustris (strain BisA53) protein is Transcription elongation factor GreA.